Here is a 68-residue protein sequence, read N- to C-terminus: Large ribosomal subunit protein bL33c (68 aa).

It belongs to the bacterial ribosomal protein bL33 family.

It localises to the plastid. The protein localises to the chloroplast. This is Large ribosomal subunit protein bL33c from Nymphaea alba (White water-lily).